The following is a 617-amino-acid chain: Dihydroxy-acid dehydratase (617 aa).

Aspartate 81 contacts Mg(2+). Cysteine 122 serves as a coordination point for [2Fe-2S] cluster. 2 residues coordinate Mg(2+): aspartate 123 and lysine 124. N6-carboxylysine is present on lysine 124. Residue cysteine 195 coordinates [2Fe-2S] cluster. Glutamate 491 contacts Mg(2+). Serine 517 serves as the catalytic Proton acceptor.

It belongs to the IlvD/Edd family. Homodimer. Requires [2Fe-2S] cluster as cofactor. Mg(2+) serves as cofactor.

It catalyses the reaction (2R)-2,3-dihydroxy-3-methylbutanoate = 3-methyl-2-oxobutanoate + H2O. The enzyme catalyses (2R,3R)-2,3-dihydroxy-3-methylpentanoate = (S)-3-methyl-2-oxopentanoate + H2O. Its pathway is amino-acid biosynthesis; L-isoleucine biosynthesis; L-isoleucine from 2-oxobutanoate: step 3/4. The protein operates within amino-acid biosynthesis; L-valine biosynthesis; L-valine from pyruvate: step 3/4. In terms of biological role, functions in the biosynthesis of branched-chain amino acids. Catalyzes the dehydration of (2R,3R)-2,3-dihydroxy-3-methylpentanoate (2,3-dihydroxy-3-methylvalerate) into 2-oxo-3-methylpentanoate (2-oxo-3-methylvalerate) and of (2R)-2,3-dihydroxy-3-methylbutanoate (2,3-dihydroxyisovalerate) into 2-oxo-3-methylbutanoate (2-oxoisovalerate), the penultimate precursor to L-isoleucine and L-valine, respectively. The polypeptide is Dihydroxy-acid dehydratase (Caulobacter vibrioides (strain ATCC 19089 / CIP 103742 / CB 15) (Caulobacter crescentus)).